We begin with the raw amino-acid sequence, 143 residues long: Regulator of ribonuclease activity B (143 aa).

Residues 117–135 (DPDAEYDDEDGENEDDESE) are compositionally biased toward acidic residues. Positions 117-143 (DPDAEYDDEDGENEDDESESDKSSRLH) are disordered.

It belongs to the RraB family. In terms of assembly, interacts with the C-terminal region of Rne.

The protein resides in the cytoplasm. In terms of biological role, globally modulates RNA abundance by binding to RNase E (Rne) and regulating its endonucleolytic activity. Can modulate Rne action in a substrate-dependent manner by altering the composition of the degradosome. In Proteus mirabilis (strain HI4320), this protein is Regulator of ribonuclease activity B.